Reading from the N-terminus, the 154-residue chain is Myoglobin (154 aa).

The Globin domain occupies 2–148 (GLSDGEWQLV…FRNDIAAKYK (147 aa)). A Phosphoserine modification is found at serine 4. Residue histidine 65 coordinates nitrite. Histidine 65 is a binding site for O2. Threonine 68 carries the phosphothreonine modification. Position 94 (histidine 94) interacts with heme b.

Belongs to the globin family. In terms of assembly, monomeric.

The protein resides in the cytoplasm. It localises to the sarcoplasm. The enzyme catalyses Fe(III)-heme b-[protein] + nitric oxide + H2O = Fe(II)-heme b-[protein] + nitrite + 2 H(+). It carries out the reaction H2O2 + AH2 = A + 2 H2O. Functionally, monomeric heme protein which primary function is to store oxygen and facilitate its diffusion within muscle tissues. Reversibly binds oxygen through a pentacoordinated heme iron and enables its timely and efficient release as needed during periods of heightened demand. Depending on the oxidative conditions of tissues and cells, and in addition to its ability to bind oxygen, it also has a nitrite reductase activity whereby it regulates the production of bioactive nitric oxide. Under stress conditions, like hypoxia and anoxia, it also protects cells against reactive oxygen species thanks to its pseudoperoxidase activity. In Erinaceus europaeus (Western European hedgehog), this protein is Myoglobin (MB).